Consider the following 334-residue polypeptide: D-fructose 1,6-bisphosphatase class 2/sedoheptulose 1,7-bisphosphatase (334 aa).

Mn(2+)-binding residues include Asp-33, Glu-57, Asp-85, and Glu-88. Residues 88–90, Tyr-119, 164–166, and 186–188 contribute to the substrate site; these read EGT, RAR, and DGD. Glu-213 provides a ligand contact to Mn(2+).

This sequence belongs to the FBPase class 2 family. As to quaternary structure, homotetramer. Requires Mn(2+) as cofactor.

The catalysed reaction is beta-D-fructose 1,6-bisphosphate + H2O = beta-D-fructose 6-phosphate + phosphate. It catalyses the reaction D-sedoheptulose 1,7-bisphosphate + H2O = D-sedoheptulose 7-phosphate + phosphate. It participates in carbohydrate biosynthesis; Calvin cycle. Functionally, catalyzes the hydrolysis of fructose 1,6-bisphosphate (Fru 1,6-P2) and sedoheptulose 1,7-bisphosphate (Sed 1,7-P2) to fructose 6-phosphate and sedoheptulose 7-phosphate, respectively. The polypeptide is D-fructose 1,6-bisphosphatase class 2/sedoheptulose 1,7-bisphosphatase (Prochlorococcus marinus (strain NATL1A)).